A 233-amino-acid polypeptide reads, in one-letter code: MGQKVHPKIIRLGIIKYWLSTWYANTKEFAENLQGDFKVRQFLTKELSKASISHVVIERPPKSIRVTIYTARPGIVIGKKGEDVEKLRKRVALIAGVPAQINTYEIRKPELDPKLVADGITSQLERRVMFRRAMKRAVQNTMRAGAKGIKVEVSGRLGGAEIARTEWYREGRVPLHTLRADIDYDTSEAHTTYGVIGVKVWIFKGEILGTVLPFKQAEQPKQQQRKGRSKENR.

The region spanning 39-107 (VRQFLTKELS…PAQINTYEIR (69 aa)) is the KH type-2 domain.

Belongs to the universal ribosomal protein uS3 family. In terms of assembly, part of the 30S ribosomal subunit. Forms a tight complex with proteins S10 and S14.

Functionally, binds the lower part of the 30S subunit head. Binds mRNA in the 70S ribosome, positioning it for translation. In Hamiltonella defensa subsp. Acyrthosiphon pisum (strain 5AT), this protein is Small ribosomal subunit protein uS3.